The sequence spans 488 residues: Thiamine transporter 2 (488 aa).

The Cytoplasmic segment spans residues 1-8 (MDSSCRTP). A helical membrane pass occupies residues 9-29 (PSNSWVYPTVILCLFGFFSMF). Over 30 to 54 (RPSEAFLIPFLSEPSKNLTSPEMTN) the chain is Extracellular. Asn-46 carries an N-linked (GlcNAc...) asparagine glycan. A helical membrane pass occupies residues 55 to 75 (EILPVWTYSYLATLPPVFVLT). At 76–82 (DYLRYKP) the chain is on the cytoplasmic side. The helical transmembrane segment at 83–103 (VIMLHVVAFATSYLFLLFGQG) threads the bilayer. Topologically, residues 104–111 (VMLMQTAE) are extracellular. The helical transmembrane segment at 112 to 132 (FFFGVVSATEIAYFAYIYSMV) threads the bilayer. Residues 133 to 145 (SPEHYQKVSSYCR) are Cytoplasmic-facing. The helical transmembrane segment at 146-166 (SITLVAYTAGSVLAQLLVSLT) threads the bilayer. At 167-172 (NLPYSS) the chain is on the extracellular side. A helical membrane pass occupies residues 173–193 (LFYISLACVSVAFFFSLFLPM). Over 194 to 276 (PKKSMFFHAK…YSSKHLVYWS (83 aa)) the chain is Cytoplasmic. A helical membrane pass occupies residues 277-297 (LWWAFATAGYNQILNYVQVLW). Residues 298–310 (EHKAPSQDSSIYN) are Extracellular-facing. The helical transmembrane segment at 311–331 (GAVEAIATFGGALASFSVGYL) threads the bilayer. The Cytoplasmic segment spans residues 332-335 (KVNW). Residues 336–356 (DLLGELGLAVFSAVIAGSLFL) traverse the membrane as a helical segment. The Extracellular segment spans residues 357–369 (MNYSRSIWVCYAG). Residue Asn-358 is glycosylated (N-linked (GlcNAc...) asparagine). Residues 370-390 (YLLVKSSYSFLITIAVFQIAV) traverse the membrane as a helical segment. Residues 391–399 (NLSLERYAL) are Cytoplasmic-facing. Residues 400-420 (VFGIDTFIALVIQTIMTMIVV) traverse the membrane as a helical segment. Residues 421–428 (DQRGLQLP) lie on the Extracellular side of the membrane. A helical transmembrane segment spans residues 429–449 (VTTQFLVYGSYFAVIAGVFLM). Residues 450-488 (RSIYILCSAKCRKEVQNLATTRSPNEPHPQEPSNVSTKF) lie on the Cytoplasmic side of the membrane. The disordered stretch occupies residues 469-488 (TTRSPNEPHPQEPSNVSTKF).

This sequence belongs to the reduced folate carrier (RFC) transporter (TC 2.A.48) family. As to expression, high expression in kidney, brain, lung and small intestine. Detected in pancreatic acinar cells (at protein level). Also expressed strongly in pancreatic islet cells.

The protein localises to the membrane. It catalyses the reaction thiamine(out) + H(+)(in) = thiamine(in) + H(+)(out). High-affinity transporter for the intake of thiamine. Unlike the human ortholog, lacks H(+)-dependent pyridoxine transport activity due to an absence of seven critical amino-acids required for pyridoxine transport. This is Thiamine transporter 2 (Slc19a3) from Mus musculus (Mouse).